Reading from the N-terminus, the 591-residue chain is Probable translation initiation factor IF-2 (591 aa).

Residues 7–223 (LRTPIVCVMG…LLGLAQKFLE (217 aa)) form the tr-type G domain. A G1 region spans residues 16–23 (GHVDHGKT). 16–23 (GHVDHGKT) provides a ligand contact to GTP. The tract at residues 41-45 (AITQH) is G2. The tract at residues 78–81 (DTPG) is G3. GTP is bound by residues 78–82 (DTPGH) and 132–135 (NKID). A G4 region spans residues 132-135 (NKID). Residues 200-202 (SAM) are G5.

This sequence belongs to the TRAFAC class translation factor GTPase superfamily. Classic translation factor GTPase family. IF-2 subfamily.

In terms of biological role, function in general translation initiation by promoting the binding of the formylmethionine-tRNA to ribosomes. Seems to function along with eIF-2. The polypeptide is Probable translation initiation factor IF-2 (Methanosarcina barkeri (strain Fusaro / DSM 804)).